We begin with the raw amino-acid sequence, 735 residues long: 1,4-alpha-glucan branching enzyme GlgB (735 aa).

The active-site Nucleophile is the D418. E471 serves as the catalytic Proton donor.

This sequence belongs to the glycosyl hydrolase 13 family. GlgB subfamily. As to quaternary structure, monomer.

It catalyses the reaction Transfers a segment of a (1-&gt;4)-alpha-D-glucan chain to a primary hydroxy group in a similar glucan chain.. Its pathway is glycan biosynthesis; glycogen biosynthesis. Catalyzes the formation of the alpha-1,6-glucosidic linkages in glycogen by scission of a 1,4-alpha-linked oligosaccharide from growing alpha-1,4-glucan chains and the subsequent attachment of the oligosaccharide to the alpha-1,6 position. The chain is 1,4-alpha-glucan branching enzyme GlgB from Agrobacterium fabrum (strain C58 / ATCC 33970) (Agrobacterium tumefaciens (strain C58)).